Reading from the N-terminus, the 165-residue chain is Nucleotide-binding protein Chy400_2003 (165 aa).

This sequence belongs to the YajQ family.

In terms of biological role, nucleotide-binding protein. The sequence is that of Nucleotide-binding protein Chy400_2003 from Chloroflexus aurantiacus (strain ATCC 29364 / DSM 637 / Y-400-fl).